We begin with the raw amino-acid sequence, 894 residues long: DNA mismatch repair protein MutS (894 aa).

632–639 (GPNMGGKS) provides a ligand contact to ATP.

It belongs to the DNA mismatch repair MutS family.

Functionally, this protein is involved in the repair of mismatches in DNA. It is possible that it carries out the mismatch recognition step. This protein has a weak ATPase activity. The sequence is that of DNA mismatch repair protein MutS from Paraburkholderia xenovorans (strain LB400).